A 320-amino-acid chain; its full sequence is Aminoacyl tRNA synthase complex-interacting multifunctional protein 2 (320 aa).

The segment at 82-162 (TPDADLDVTN…HTHSSVKSVP (81 aa)) is interaction with PRKN. Positions 162 to 225 (PENLLKCFGE…FLFSLFGQKH (64 aa)) are interaction with TP53. The region spanning 220–317 (LFGQKHNAVN…NLAPFNTALK (98 aa)) is the GST C-terminal domain.

In terms of assembly, part of the multisynthetase complex (MSC), a multisubunit complex that groups tRNA ligases for Arg (RARS1), Asp (DARS1), Gln (QARS1), Ile (IARS1), Leu (LARS1), Lys (KARS1), Met (MARS1) the bifunctional ligase for Glu and Pro (EPRS1) and the auxiliary subunits AIMP1/p43, AIMP2/p38 and EEF1E1/p18. Interacts (via N-terminus) with KARS1. Interacts with EPRS1. Forms a linear complex that contains MARS1, EEF1E1, EPRS1 and AIMP2 that is at the core of the multisubunit complex. Binds FUBP1 (via C-terminus). Interacts in both its unphosphorylated and phosphorylated forms with p53/TP53 (via N-terminus) in the nucleus following UV irradiation. Interacts (via N-terminus) with PRKN/parkin (via first RING-type domain). Interacts with TARS3. In terms of processing, phosphorylated on serine residues in response to UV irradiation. Ubiquitinated by PRKN, leading to its degradation by the proteasome. Mutant PRKN fails to ubiquitinate AIMP2 efficiently, allowing its accumulation which may contribute to neurodegeneration associated with Parkinson disease.

The protein localises to the cytoplasm. The protein resides in the cytosol. It is found in the nucleus. In terms of biological role, required for assembly and stability of the aminoacyl-tRNA synthase complex. Mediates ubiquitination and degradation of FUBP1, a transcriptional activator of MYC, leading to MYC down-regulation which is required for aveolar type II cell differentiation. Blocks MDM2-mediated ubiquitination and degradation of p53/TP53. Functions as a proapoptotic factor. The polypeptide is Aminoacyl tRNA synthase complex-interacting multifunctional protein 2 (AIMP2) (Homo sapiens (Human)).